We begin with the raw amino-acid sequence, 3948 residues long: Equisetin synthetase eqxS (3948 aa).

Residues 4–438 (SEPIAVIGSA…GTNAHAIIEA (435 aa)) enclose the Ketosynthase family 3 (KS3) domain. Active-site for beta-ketoacyl synthase activity residues include cysteine 177, histidine 316, and histidine 358. The segment at 543 to 847 (IFTGQGTQWP…DTIEAISEGR (305 aa)) is malonyl-CoA:ACP transacylase (MAT) domain. Residues 931 to 1066 (HPLLGRRCHD…AQIKASLGAP (136 aa)) are N-terminal hotdog fold. The dehydratase (DH) domain stretch occupies residues 931–1233 (HPLLGRRCHD…MELVPFSPAT (303 aa)). The PKS/mFAS DH domain occupies 931-1235 (HPLLGRRCHD…LVPFSPATPA (305 aa)). Histidine 964 (proton acceptor; for dehydratase activity) is an active-site residue. The C-terminal hotdog fold stretch occupies residues 1081–1235 (LRPVSVDRFY…LVPFSPATPA (155 aa)). Catalysis depends on aspartate 1141, which acts as the Proton donor; for dehydratase activity. Residues 1376-1574 (MLQDVYEQGF…GIDTTTPPVH (199 aa)) are methyltransferase (MT) domain. A ketoreductase (KR) domain region spans residues 2105-2277 (TFLLVGLTGE…VAASSIDISS (173 aa)). In terms of domain architecture, Carrier 1 spans 2389 to 2464 (AIIKESFIVR…DLVDECLDLL (76 aa)). The residue at position 2424 (serine 2424) is an O-(pantetheine 4'-phosphoryl)serine. Residues 2480 to 2553 (QAAKPTTVIP…NSTDILAPPR (74 aa)) are disordered. Composition is skewed to polar residues over residues 2487-2505 (VIPQTPTRVTPPESSQGTS) and 2513-2528 (GSDSSHSPIGTPLTSW). Positions 2529-2541 (DRQDSSPPDKSDD) are enriched in basic and acidic residues. A condensation (C) domain region spans residues 2564–2991 (SYGQAGFWFL…IRGSDKTVDA (428 aa)). The tract at residues 3026-3424 (QVIQDNPDNI…DGLLFCDGRL (399 aa)) is adenylation (A) (KR) domain. One can recognise a Carrier 2 domain in the interval 3540–3617 (EILTPSEQRL…AMAGVLEDCG (78 aa)). Position 3577 is an O-(pantetheine 4'-phosphoryl)serine (serine 3577). The segment at 3653-3870 (LTGSSGYLGR…MPVNEVVEAI (218 aa)) is reductase (RED) domain.

This sequence in the C-terminal section; belongs to the NRP synthetase family.

The enzyme catalyses L-serine + 7 malonyl-CoA + acetyl-CoA + 2 S-adenosyl-L-methionine + ATP + 8 NADPH + 11 H(+) = (5S)-3-[(2E,6R,8E,10E,12E)-2,6-dimethyltetradeca-2,8,10,12-tetraenoyl]-5-(hydroxymethyl)pyrrolidine-2,4-dione + AMP + 2 S-adenosyl-L-homocysteine + 7 CO2 + diphosphate + 8 NADP(+) + 8 CoA + 6 H2O. Its pathway is mycotoxin biosynthesis. Functionally, hybrid PKS-NRPS synthetase; part of the gene cluster that mediates the biosynthesis of equisetin, a trans-fused decalin-containing tetramic acid with antimicrobial activity. The PKS module of eqxS together with the enoylreductase eqxC catalyze the formation of the polyketide unit which is then conjugated to L-serine by the condensation domain of the eqxS NRPS module. Activity of the Dieckmann cyclase domain (RED) results in release of the Dieckmann product intermediate. Diels-Alderase eqx3 is involved in endo-selective Diels-Alder cycloaddition to form the decalin ring, leading to the production of N-desmethylequisetin also called trichosetin. Subsequent N-methylation is carried out by eqxD to give equisetin. The chain is Equisetin synthetase eqxS from Fusarium heterosporum.